The following is a 428-amino-acid chain: Enolase 1 (428 aa).

Residue Gln167 coordinates (2R)-2-phosphoglycerate. The active-site Proton donor is Glu209. Asp246, Glu288, and Asp315 together coordinate Mg(2+). 4 residues coordinate (2R)-2-phosphoglycerate: Lys340, Arg369, Ser370, and Lys391. The active-site Proton acceptor is Lys340.

This sequence belongs to the enolase family. Component of the RNA degradosome, a multiprotein complex involved in RNA processing and mRNA degradation. The cofactor is Mg(2+).

The protein resides in the cytoplasm. The protein localises to the secreted. Its subcellular location is the cell surface. The enzyme catalyses (2R)-2-phosphoglycerate = phosphoenolpyruvate + H2O. It participates in carbohydrate degradation; glycolysis; pyruvate from D-glyceraldehyde 3-phosphate: step 4/5. In terms of biological role, catalyzes the reversible conversion of 2-phosphoglycerate (2-PG) into phosphoenolpyruvate (PEP). It is essential for the degradation of carbohydrates via glycolysis. The polypeptide is Enolase 1 (Pseudomonas syringae pv. syringae (strain B728a)).